A 254-amino-acid chain; its full sequence is Small ribosomal subunit protein uS2 (254 aa).

This sequence belongs to the universal ribosomal protein uS2 family.

The chain is Small ribosomal subunit protein uS2 from Borrelia duttonii (strain Ly).